Here is a 356-residue protein sequence, read N- to C-terminus: DNA polymerase IV (356 aa).

A UmuC domain is found at 6–186 (IVHIDMDAFY…LPVDAFHGIG (181 aa)). Mg(2+) contacts are provided by Asp10 and Asp104. The active site involves Glu105.

Belongs to the DNA polymerase type-Y family. In terms of assembly, monomer. Mg(2+) is required as a cofactor.

It is found in the cytoplasm. The catalysed reaction is DNA(n) + a 2'-deoxyribonucleoside 5'-triphosphate = DNA(n+1) + diphosphate. Its function is as follows. Poorly processive, error-prone DNA polymerase involved in untargeted mutagenesis. Copies undamaged DNA at stalled replication forks, which arise in vivo from mismatched or misaligned primer ends. These misaligned primers can be extended by PolIV. Exhibits no 3'-5' exonuclease (proofreading) activity. May be involved in translesional synthesis, in conjunction with the beta clamp from PolIII. This Gluconobacter oxydans (strain 621H) (Gluconobacter suboxydans) protein is DNA polymerase IV.